A 277-amino-acid chain; its full sequence is Phosphate import ATP-binding protein PstB (277 aa).

The ABC transporter domain occupies 31–272 (LEVPGLNLFY…PAKKQTEDYI (242 aa)). Position 63 to 70 (63 to 70 (GPSGCGKS)) interacts with ATP.

This sequence belongs to the ABC transporter superfamily. Phosphate importer (TC 3.A.1.7) family. In terms of assembly, the complex is composed of two ATP-binding proteins (PstB), two transmembrane proteins (PstC and PstA) (Potential). PstS is missing in this species.

It localises to the cell inner membrane. It catalyses the reaction phosphate(out) + ATP + H2O = ADP + 2 phosphate(in) + H(+). Its function is as follows. Part of the ABC transporter complex PstSACB involved in phosphate import. Responsible for energy coupling to the transport system. This chain is Phosphate import ATP-binding protein PstB, found in Pseudomonas aeruginosa (strain ATCC 15692 / DSM 22644 / CIP 104116 / JCM 14847 / LMG 12228 / 1C / PRS 101 / PAO1).